The following is a 156-amino-acid chain: RING finger protein 224 (156 aa).

The RING-type zinc finger occupies 23 to 70 (CIICYSAYDLSVHLPRRLYCGHTFCQACMQRLDMPAHEQHWIPCPQCR).

This chain is RING finger protein 224 (Rnf224), found in Mus musculus (Mouse).